The following is a 388-amino-acid chain: Zinc finger protein 1 (388 aa).

Residues 1-19 (MSSIPNINWNDPNNGKSNT) are compositionally biased toward polar residues. 3 disordered regions span residues 1-120 (MSSI…QQPL), 157-219 (LQQR…QQWD), and 236-311 (SSIQ…KPIT). Over residues 20-38 (SRQSQPQPQLPSNVSPPNS) the composition is skewed to low complexity. Composition is skewed to polar residues over residues 52 to 67 (YGSS…NPNT) and 88 to 97 (YPVQQTAQQR). Low complexity-rich tracts occupy residues 102 to 120 (LQQV…QQPL) and 157 to 172 (LQQR…KSQL). Over residues 173 to 203 (NEQNAMMSASTQQYPVQDFTNPYPNAQNPAE) the composition is skewed to polar residues. 2 stretches are compositionally biased toward low complexity: residues 204-217 (QQQQ…QSQQ) and 236-259 (SSIQ…KQQQ). The span at 268–278 (KKKPGRKPKLR) shows a compositional bias: basic residues. Over residues 282–294 (ESSSETPQVPKTA) the composition is skewed to polar residues. The segment at residues 318–345 (CLTCRQRKKRCCETRPRCTECTRLRLNC) is a DNA-binding region (zn(2)-C6 fungal-type). The disordered stretch occupies residues 348–367 (PKPGTEHKNKPKDQKDDENT). The segment covering 351-367 (GTEHKNKPKDQKDDENT) has biased composition (basic and acidic residues).

It localises to the nucleus. Perhaps a regulatory role. May be involved in transcriptional activation. In Candida albicans (strain WO-1) (Yeast), this protein is Zinc finger protein 1 (CZF1).